Consider the following 718-residue polypeptide: ATP-dependent RNA helicase homolog DQX1 (718 aa).

Residues 54–222 (HLESSPTGVV…WGNSPIVRVP (169 aa)) enclose the Helicase ATP-binding domain. 67–74 (GDPGSGKS) provides a ligand contact to ATP. Positions 167–170 (DEAQ) match the DEAQ box motif. A Helicase C-terminal domain is found at 245 to 447 (ACQAVLELCQ…ALMRALEDLD (203 aa)). The segment at 690–718 (QLREGTAEPPAAATETSSPQEYGDGCVLQ) is disordered. A compositionally biased stretch (low complexity) spans 696–708 (AEPPAAATETSSP).

In terms of tissue distribution, ubiquitous.

The protein resides in the nucleus. In terms of biological role, might be involved in RNA metabolism; it is missing helicase motif III and may not have helicase activity. In Mus musculus (Mouse), this protein is ATP-dependent RNA helicase homolog DQX1 (Dqx1).